Here is a 247-residue protein sequence, read N- to C-terminus: Putative 2-succinyl-6-hydroxy-2,4-cyclohexadiene-1-carboxylate synthase (247 aa).

The region spanning 4–229 is the AB hydrolase-1 domain; sequence IIFLHGLLGT…CAGHNSHLEN (226 aa).

The protein belongs to the AB hydrolase superfamily. MenH family. Monomer.

It catalyses the reaction 5-enolpyruvoyl-6-hydroxy-2-succinyl-cyclohex-3-ene-1-carboxylate = (1R,6R)-6-hydroxy-2-succinyl-cyclohexa-2,4-diene-1-carboxylate + pyruvate. It functions in the pathway quinol/quinone metabolism; 1,4-dihydroxy-2-naphthoate biosynthesis; 1,4-dihydroxy-2-naphthoate from chorismate: step 3/7. Its pathway is quinol/quinone metabolism; menaquinone biosynthesis. Its function is as follows. Catalyzes a proton abstraction reaction that results in 2,5-elimination of pyruvate from 2-succinyl-5-enolpyruvyl-6-hydroxy-3-cyclohexene-1-carboxylate (SEPHCHC) and the formation of 2-succinyl-6-hydroxy-2,4-cyclohexadiene-1-carboxylate (SHCHC). The chain is Putative 2-succinyl-6-hydroxy-2,4-cyclohexadiene-1-carboxylate synthase from Haemophilus influenzae (strain ATCC 51907 / DSM 11121 / KW20 / Rd).